The sequence spans 3251 residues: Centrosome-associated protein ALMS1 (3251 aa).

Residues 1–26 (MEPEDLPWPDELEEEEEEEEEEGEEE) show a composition bias toward acidic residues. Residues 1 to 116 (MEPEDLPWPD…PPPPLSPRLR (116 aa)) are disordered. Positions 34–47 (NASAAATEEALTSE) are enriched in low complexity. Over residues 99–112 (LPPPTPPPPPPPLS) the composition is skewed to pro residues. Ser401 bears the Phosphoserine mark. Tandem repeats lie at residues 440-485 (QEEL…SIFY), 486-534 (QHPV…VSVI), 540-587 (QKTP…SRTY), 588-638 (QHKM…SVFY), 639-684 (QQGL…VSPY), 685-731 (QLTL…NSSY), 732-777 (QQKF…SIFY), 778-824 (QQTL…RIFY), 825-871 (QQTL…IIFY), 872-917 (QAGF…IIFY), 918-959 (HQAL…IIFY), 960-1005 (QQPM…TVSY), 1006-1048 (QKEF…PSAY), 1115-1163 (QQEL…LSDY), 1164-1208 (QKAS…HEIS), 1269-1314 (KQLR…DSFY), and 1315-1362 (PQEL…LISE). The segment at 440–1362 (QEELPDRHLN…HSEKHQLISE (923 aa)) is 17 X 47 AA approximate tandem repeat. Positions 615–686 (FESGPAGQKS…AEKPVSPYQL (72 aa)) are disordered. Residues 963-986 (MSDSQRTKGHKESDVPGPTDQKTG) form a disordered region. 2 disordered regions span residues 1094–1115 (ADRK…GFHQ) and 1142–1189 (QTPG…SDQK). The segment covering 1158-1173 (EKLSDYQKASPHRDLT) has biased composition (basic and acidic residues). Position 1305 is a phosphoserine (Ser1305). Residues Ser1623, Ser1788, Ser1916, and Ser1958 each carry the phosphoserine modification. Disordered stretches follow at residues 2421–2452 (KSDT…RDDD), 2464–2485 (GIYS…DAAA), 2659–2685 (IKNQ…TPEL), 2738–2804 (SLRA…SSQF), 2822–2871 (FNNV…PLNE), and 3002–3027 (FPTP…EKAK). Residues 2423 to 2434 (DTTVESSHSGSN) show a composition bias toward polar residues. Composition is skewed to basic and acidic residues over residues 2659–2681 (IKNQ…DQKV) and 2747–2760 (DDSR…EWTG). Over residues 2762–2775 (RQQKQKGKQHRKWS) the composition is skewed to basic residues. The segment covering 2823–2854 (NNVSNTSLDSRPSEESVSLTDSPNIFSSTDSP) has biased composition (polar residues). Residues 3129–3251 (TLQESLQLHR…HLLGRKVPWD (123 aa)) are ALMS motif.

This sequence belongs to the ALMS1 family. As to expression, ubiquitously expressed.

The protein localises to the cytoplasm. The protein resides in the cytoskeleton. It is found in the microtubule organizing center. It localises to the centrosome. Its subcellular location is the cilium basal body. The protein localises to the spindle pole. Its function is as follows. Involved in PCM1-dependent intracellular transport. Required, directly or indirectly, for the localization of NCAPD2 to the proximal ends of centrioles. Required for proper formation and/or maintenance of primary cilia (PC), microtubule-based structures that protrude from the surface of epithelial cells. This is Centrosome-associated protein ALMS1 (Alms1) from Mus musculus (Mouse).